The sequence spans 141 residues: Large ribosomal subunit protein uL16 (141 aa).

Belongs to the universal ribosomal protein uL16 family. Part of the 50S ribosomal subunit.

In terms of biological role, binds 23S rRNA and is also seen to make contacts with the A and possibly P site tRNAs. This chain is Large ribosomal subunit protein uL16, found in Kosmotoga olearia (strain ATCC BAA-1733 / DSM 21960 / TBF 19.5.1).